Here is a 73-residue protein sequence, read N- to C-terminus: Protein F9 homolog (73 aa).

Topologically, residues 1–34 (GHAAANCALARVATALTRRVPASRHGLAEGGTPP) are virion surface. A helical transmembrane segment spans residues 35-55 (WTLLLAVAAVTVLGVVAVSLL). At 56–73 (RRALRVRYRFARPAALRA) the chain is on the intravirion side.

Belongs to the chordopoxvirinae L1 protein family.

It localises to the virion membrane. The protein is Protein F9 homolog of Capra hircus (Goat).